We begin with the raw amino-acid sequence, 415 residues long: MFDRAQSTIANVDPEIWQAIQQENVRQEEHIELIASENYTSPAVMAAQGSQLTNKYAEGYPGKRYYGGCEYVDIVEQLAIDRVKALFGSEAANVQPNSGSQANQGVFFAMLKPGDTIMGMSLAHGGHLTHGSPVNMSGKWFNVVSYGLNENEDIDYEAADKLAHEHKPKLIVAGASAFALKIDFERLAKIAKAVGAYLMVDMAHYAGLIAAGVYPNPVPHADFVTTTTHKSLRGPRGGVILMKAEYEKQINSAIFPGIQGGPLMHVIAAKAVAFKEALSPEFKEYQQKVIENARVLAETLVKRGLRIVSGRTESHVMLVDLRAKNITGKAAEAALGNAHITVNKNAIPNDPEKPFVTSGVRLGSPAMTTRGFGPQEAELVGNLIADVLEHPEDAATIERVRAQVADLTKRFPVYR.

(6S)-5,6,7,8-tetrahydrofolate contacts are provided by residues Leu-122 and 126–128; that span reads GHL. Position 230 is an N6-(pyridoxal phosphate)lysine (Lys-230).

Belongs to the SHMT family. Homodimer. It depends on pyridoxal 5'-phosphate as a cofactor.

The protein resides in the cytoplasm. The catalysed reaction is (6R)-5,10-methylene-5,6,7,8-tetrahydrofolate + glycine + H2O = (6S)-5,6,7,8-tetrahydrofolate + L-serine. It functions in the pathway one-carbon metabolism; tetrahydrofolate interconversion. It participates in amino-acid biosynthesis; glycine biosynthesis; glycine from L-serine: step 1/1. Its function is as follows. Catalyzes the reversible interconversion of serine and glycine with tetrahydrofolate (THF) serving as the one-carbon carrier. This reaction serves as the major source of one-carbon groups required for the biosynthesis of purines, thymidylate, methionine, and other important biomolecules. Also exhibits THF-independent aldolase activity toward beta-hydroxyamino acids, producing glycine and aldehydes, via a retro-aldol mechanism. The chain is Serine hydroxymethyltransferase 1 from Burkholderia thailandensis (strain ATCC 700388 / DSM 13276 / CCUG 48851 / CIP 106301 / E264).